The primary structure comprises 829 residues: Translation initiation factor IF-2 (829 aa).

Basic and acidic residues predominate over residues 128 to 137 (QNAEEEKVEA). The interval 128 to 157 (QNAEEEKVEASAKTVQNNEDIQPQTSKKKE) is disordered. Positions 140–152 (KTVQNNEDIQPQT) are enriched in polar residues. A tr-type G domain is found at 327–497 (TRAPVVTVMG…LLIAEMQDLK (171 aa)). Residues 336 to 343 (GHVDHGKT) are G1. 336-343 (GHVDHGKT) provides a ligand contact to GTP. Residues 361–365 (GITQH) are G2. The segment at 383–386 (DTPG) is G3. GTP is bound by residues 383–387 (DTPGH) and 437–440 (NKID). The tract at residues 437-440 (NKID) is G4. A G5 region spans residues 473–475 (SAL).

It belongs to the TRAFAC class translation factor GTPase superfamily. Classic translation factor GTPase family. IF-2 subfamily.

The protein resides in the cytoplasm. Functionally, one of the essential components for the initiation of protein synthesis. Protects formylmethionyl-tRNA from spontaneous hydrolysis and promotes its binding to the 30S ribosomal subunits. Also involved in the hydrolysis of GTP during the formation of the 70S ribosomal complex. The protein is Translation initiation factor IF-2 of Rickettsia felis (strain ATCC VR-1525 / URRWXCal2) (Rickettsia azadi).